A 467-amino-acid chain; its full sequence is ATP synthase subunit beta (467 aa).

Residue 157–164 (GGAGVGKT) coordinates ATP.

It belongs to the ATPase alpha/beta chains family. As to quaternary structure, F-type ATPases have 2 components, CF(1) - the catalytic core - and CF(0) - the membrane proton channel. CF(1) has five subunits: alpha(3), beta(3), gamma(1), delta(1), epsilon(1). CF(0) has three main subunits: a(1), b(2) and c(9-12). The alpha and beta chains form an alternating ring which encloses part of the gamma chain. CF(1) is attached to CF(0) by a central stalk formed by the gamma and epsilon chains, while a peripheral stalk is formed by the delta and b chains.

Its subcellular location is the cell inner membrane. The enzyme catalyses ATP + H2O + 4 H(+)(in) = ADP + phosphate + 5 H(+)(out). Its function is as follows. Produces ATP from ADP in the presence of a proton gradient across the membrane. The catalytic sites are hosted primarily by the beta subunits. This chain is ATP synthase subunit beta, found in Desulfosudis oleivorans (strain DSM 6200 / JCM 39069 / Hxd3) (Desulfococcus oleovorans).